The chain runs to 614 residues: Phosphomethylpyrimidine synthase (614 aa).

Substrate contacts are provided by residues N226, M255, Y284, H320, 340 to 342, 381 to 384, and E420; these read SRG and DGLR. Position 424 (H424) interacts with Zn(2+). Y447 contributes to the substrate binding site. H488 serves as a coordination point for Zn(2+). [4Fe-4S] cluster is bound by residues C568, C571, and C576.

This sequence belongs to the ThiC family. Homodimer. Requires [4Fe-4S] cluster as cofactor.

It carries out the reaction 5-amino-1-(5-phospho-beta-D-ribosyl)imidazole + S-adenosyl-L-methionine = 4-amino-2-methyl-5-(phosphooxymethyl)pyrimidine + CO + 5'-deoxyadenosine + formate + L-methionine + 3 H(+). It functions in the pathway cofactor biosynthesis; thiamine diphosphate biosynthesis. Functionally, catalyzes the synthesis of the hydroxymethylpyrimidine phosphate (HMP-P) moiety of thiamine from aminoimidazole ribotide (AIR) in a radical S-adenosyl-L-methionine (SAM)-dependent reaction. This chain is Phosphomethylpyrimidine synthase, found in Acidovorax ebreus (strain TPSY) (Diaphorobacter sp. (strain TPSY)).